A 307-amino-acid chain; its full sequence is Dihydroorotate dehydrogenase A (fumarate) (307 aa).

FMN is bound by residues S21 and 46-47 (KT). Substrate-binding positions include K46, 70-74 (NSVGL), and N130. FMN is bound at residue N130. C133 acts as the Nucleophile in catalysis. The FMN site is built by K168 and I194. 195–196 (NT) is a substrate binding site. FMN is bound by residues G220, 246-247 (GG), and 268-269 (GS).

This sequence belongs to the dihydroorotate dehydrogenase family. Type 1 subfamily. In terms of assembly, homodimer. Requires FMN as cofactor.

It localises to the cytoplasm. The enzyme catalyses (S)-dihydroorotate + fumarate = orotate + succinate. Its pathway is pyrimidine metabolism; UMP biosynthesis via de novo pathway. In terms of biological role, catalyzes the conversion of dihydroorotate to orotate with fumarate as the electron acceptor. In Lactobacillus delbrueckii subsp. bulgaricus (strain ATCC BAA-365 / Lb-18), this protein is Dihydroorotate dehydrogenase A (fumarate) (pyrD).